We begin with the raw amino-acid sequence, 434 residues long: Probable G-protein coupled receptor B0563.6 (434 aa).

Residue Asn-12 is glycosylated (N-linked (GlcNAc...) asparagine). A run of 2 helical transmembrane segments spans residues 30-50 and 65-85; these read VLPC…MVLA and LAVA…TEYL. Asn-88 carries N-linked (GlcNAc...) asparagine glycosylation. A run of 2 helical transmembrane segments spans residues 105–125 and 147–167; these read LMLT…VALS and ATRA…PYAI. N-linked (GlcNAc...) asparagine glycosylation is present at Asn-181. 2 consecutive transmembrane segments (helical) span residues 208-228 and 258-278; these read ILRF…MIAF and GGTV…LLLI. N-linked (GlcNAc...) asparagine glycosylation is found at Asn-429 and Asn-430.

The protein belongs to the G-protein coupled receptor 1 family.

It localises to the cell membrane. Functionally, not known. Putative receptor. In Caenorhabditis elegans, this protein is Probable G-protein coupled receptor B0563.6.